The following is a 371-amino-acid chain: Loganic acid O-methyltransferase (371 aa).

Y31 lines the S-adenosyl-L-homocysteine pocket. Y37 and Q38 together coordinate loganate. Positions 78, 83, 114, 115, 141, and 142 each coordinate S-adenosyl-L-homocysteine. Loganate is bound by residues H162 and W163. N180 contributes to the Mg(2+) binding site. Loganate contacts are provided by A241 and H245. Mg(2+) contacts are provided by D267, F269, and N270. Residues Q273 and Q316 each contribute to the loganate site.

It belongs to the methyltransferase superfamily. Type-7 methyltransferase family. As to quaternary structure, homodimer. Requires Mg(2+) as cofactor. Expressed in leaves (especially in leaf epidermis), flowers, siliques and stems, and, at low levels, in hairy roots.

It carries out the reaction loganate + S-adenosyl-L-methionine = loganin + S-adenosyl-L-homocysteine. It functions in the pathway alkaloid biosynthesis. Its activity is regulated as follows. Strongly repressed by loganin and slightly by S-adenosyl-L-homocysteine. In terms of biological role, component of the seco-iridoid and derivatives monoterpenoid indole alkaloids (MIAs, e.g. vinblastine and ajmalicine) biosynthesis pathway. Catalyzes the methylation of loganic acid (6S,7R) to produce loganin. Weak activity with secologanic acid as substrate. Inactive on deoxyloganic, dehydrologanic, epiloganic and loganetic acid. In Catharanthus roseus (Madagascar periwinkle), this protein is Loganic acid O-methyltransferase.